A 642-amino-acid polypeptide reads, in one-letter code: 2-oxoacid:ferredoxin oxidoreductase 2, subunit alpha (642 aa).

Residues 263–267 (YPITP) carry the YPITP motif motif. Substrate is bound by residues T266 and R356.

In terms of assembly, heterodimer composed of an alpha and a beta subunit.

The catalysed reaction is a 2-oxocarboxylate + 2 oxidized [2Fe-2S]-[ferredoxin] + CoA = an acyl-CoA + 2 reduced [2Fe-2S]-[ferredoxin] + CO2 + H(+). Functionally, catalyzes the coenzyme A-dependent oxidative decarboxylation of different 2-oxoacids such as pyruvate, 2-oxobutyrate, glyoxylate and 2-oxoglutarate to form their CoA derivatives. The protein is 2-oxoacid:ferredoxin oxidoreductase 2, subunit alpha of Aeropyrum pernix (strain ATCC 700893 / DSM 11879 / JCM 9820 / NBRC 100138 / K1).